The following is a 156-amino-acid chain: Iron sulfur cluster assembly protein 2, mitochondrial (156 aa).

The N-terminal 26 residues, methionine 1–leucine 26, are a transit peptide targeting the mitochondrion.

This sequence belongs to the NifU family. Component of the core Fe-S cluster (ISC) assembly machinery. Interacts with frataxin. Interacts with the mitochondrial co-chaperones JAC1 and SSQ1. Interacts with NFS1. Interacts with ferredoxin YAH1; interacts with the reduced form. It depends on [2Fe-2S] cluster as a cofactor.

It localises to the mitochondrion matrix. It functions in the pathway cofactor biosynthesis; iron-sulfur cluster biosynthesis. In terms of biological role, scaffold protein for the de novo synthesis of iron-sulfur (Fe-S) clusters within mitochondria, which is required for maturation of both mitochondrial and cytoplasmic [2Fe-2S] and [4Fe-4S] proteins. First, a [2Fe-2S] cluster is transiently assembled on the scaffold proteins ISU1 and ISU2. In a second step, the cluster is released from ISU1/ISU2, transferred to glutaredoxin GRX5, followed by the formation of mitochondrial [2Fe-2S] proteins, the synthesis of [4Fe-4S] clusters and their target-specific insertion into the recipient apoproteins. Cluster assembly on ISU1/ISU2 depends on the function of the cysteine desulfurase complex NFS1-ISD11, which serves as the sulfur donor for cluster synthesis, the iron-binding protein frataxin (YFH1) as the putative iron donor, and the electron transfer chain comprised of ferredoxin reductase ARH1 and ferredoxin YAH1, which receive their electrons from NADH. Fe-S cluster release from ISU1/ISU2 is achieved by interaction with the Hsp70 chaperone SSQ1, assisted by the DnaJ-like co-chaperone JAC1 and the nucleotide exchange factor MGE1. ISU1 is the major isoform in yeast, while ISU2 is not detectable in cells grown to stationary phase. Also involved in production of a sulfur precursor required for thiolation of cytoplasmic tRNAs. In Saccharomyces cerevisiae (strain ATCC 204508 / S288c) (Baker's yeast), this protein is Iron sulfur cluster assembly protein 2, mitochondrial.